Reading from the N-terminus, the 401-residue chain is Putative TRAP transporter large permease protein HI_0050 (401 aa).

A run of 11 helical transmembrane segments spans residues 31–51, 70–90, 115–135, 144–164, 193–213, 217–237, 253–273, 290–310, 330–350, 353–373, and 375–395; these read FPLM…HGGI, LGYV…SAVA, GLIC…PMII, ITKL…GLWV, AFWP…GIFT, AGVV…GLTF, MVMF…VAQI, ILMF…DLIP, IAYF…TPPV, VLYV…KGIA, and FLFV…IVIV.

This sequence belongs to the TRAP transporter large permease family.

Its subcellular location is the cell inner membrane. In Haemophilus influenzae (strain ATCC 51907 / DSM 11121 / KW20 / Rd), this protein is Putative TRAP transporter large permease protein HI_0050.